Here is a 370-residue protein sequence, read N- to C-terminus: Glutamate 5-kinase (370 aa).

Residue Lys-13 coordinates ATP. Substrate-binding residues include Ser-52, Asp-139, and Asn-151. ATP contacts are provided by residues 171–172 and 211–217; these read SD and SGGMKSK. In terms of domain architecture, PUA spans 275–353; the sequence is KGELVLDRGA…AEIEAVLGYR (79 aa).

This sequence belongs to the glutamate 5-kinase family.

It is found in the cytoplasm. It carries out the reaction L-glutamate + ATP = L-glutamyl 5-phosphate + ADP. The protein operates within amino-acid biosynthesis; L-proline biosynthesis; L-glutamate 5-semialdehyde from L-glutamate: step 1/2. Its function is as follows. Catalyzes the transfer of a phosphate group to glutamate to form L-glutamate 5-phosphate. The protein is Glutamate 5-kinase of Thermus thermophilus (strain ATCC BAA-163 / DSM 7039 / HB27).